A 329-amino-acid chain; its full sequence is Calcium homeostasis modulator protein (329 aa).

Over 1 to 14 the chain is Cytoplasmic; sequence MTTSINSVVTVFQN. A helical membrane pass occupies residues 15–35; the sequence is VFTNHGSTLLNGILIATTVGG. Over 36 to 53 the chain is Extracellular; that stretch reads QSLVRKLTFSCPCAYPLN. A helical membrane pass occupies residues 54–74; it reads IYHSLVFMFGPTAALLLIGIT. The Cytoplasmic portion of the chain corresponds to 75–103; it reads VNSTTWKLAHGFFFRVRDTRHSWKTTCVS. A helical membrane pass occupies residues 104–124; that stretch reads WIEVLIQSSVAPIAWLFVVFL. Residues 125–191 lie on the Extracellular side of the membrane; it reads DGGYYRCYRS…DASYLEAESQ (67 aa). N-linked (GlcNAc...) asparagine glycosylation occurs at asparagine 148. Residues 192 to 212 traverse the membrane as a helical segment; that stretch reads IYAWGLLLFSGVAAFLVITCN. The Cytoplasmic portion of the chain corresponds to 213–329; sequence RMCDKYTLVQ…QIIVDETKED (117 aa).

It belongs to the CALHM family. As to expression, expressed in head and body wall muscles, IL2, ASG, ASI, ASJ, PHA and PHB sensory neurons, and spermatheca.

It localises to the cell membrane. Functionally, pore-forming subunit of a voltage-gated ion channel. Permeable to monovalent cations, divalent cations and anions with selectivity Ca(2+) &gt; Mg(2+) &gt; Na(+) = K(+) &gt; Cl(-). Acts both as a voltage-gated and calcium-activated ion channel. Required for normal locomotion. The polypeptide is Calcium homeostasis modulator protein (Caenorhabditis elegans).